Consider the following 602-residue polypeptide: Protein NRT1/ PTR FAMILY 5.7 (602 aa).

A run of 2 helical transmembrane segments spans residues 56–73 (LSYFGISTNLVVYLTTIL) and 87–107 (WSGVTTLMPLLGGFVADAYLG). Thr-111 carries the post-translational modification Phosphothreonine. Helical transmembrane passes span 112–132 (VLLATTIYLMGLILLTLSWFI), 152–172 (IAFFIAIYLISIGTGGHKPSL), 197–217 (WWNAGLCAGILTAVTVIVYIE), 220–240 (IGWGVASIILTIVMATSFFIF), 337–357 (VKLLINMIPIWFFTLAFGVCA), 381–401 (IVPPASLFSLIALSIIITVTI), 422–442 (ILQRIGVGMVFSLFAMIIAAL), 465–485 (IWLAPQFLVLGVADAFTLVGL), 500–520 (LGIAFYLSVLGAASFVNNLLI), and 548–568 (FYWMLAALTAANICCFVIVAM).

Belongs to the major facilitator superfamily. Proton-dependent oligopeptide transporter (POT/PTR) (TC 2.A.17) family. As to expression, expressed in shoots, stems, leaves and flowers.

It is found in the membrane. The polypeptide is Protein NRT1/ PTR FAMILY 5.7 (NPF5.7) (Arabidopsis thaliana (Mouse-ear cress)).